A 70-amino-acid polypeptide reads, in one-letter code: uncharacterized protein (70 aa).

Transmembrane regions (helical) follow at residues 13-33 (YYAF…LLGF) and 39-59 (QTYA…GLII).

Its subcellular location is the cell membrane. This is an uncharacterized protein from Escherichia coli O6:H1 (strain CFT073 / ATCC 700928 / UPEC).